The sequence spans 437 residues: O-methyltransferase 10 (437 aa).

S-adenosyl-L-methionine is bound by residues glycine 259, glutamate 282, asparagine 315, and methionine 316. Catalysis depends on histidine 335, which acts as the Proton acceptor.

The protein belongs to the class I-like SAM-binding methyltransferase superfamily. Cation-independent O-methyltransferase family. COMT subfamily.

It catalyses the reaction (3,5-dichloro-2,4,6-trihydroxyphenyl)hexan-1-one + S-adenosyl-L-methionine = 1-(3,5-dichloro-2,6-dihydroxy-4-methoxyphenyl)hexan-1-one + S-adenosyl-L-homocysteine + H(+). In Dictyostelium discoideum (Social amoeba), this protein is O-methyltransferase 10 (omt10).